The following is a 95-amino-acid chain: Corticostatin-3 (95 aa).

Positions methionine 1 to alanine 19 are cleaved as a signal peptide. A propeptide spanning residues glutamate 20–glycine 62 is cleaved from the precursor. Cystine bridges form between cysteine 65/cysteine 93, cysteine 67/cysteine 82, and cysteine 72/cysteine 92.

The protein belongs to the alpha-defensin family.

The protein resides in the secreted. In terms of biological role, this peptide has antibiotic, anti-fungi and antiviral activity. It also inhibits corticotropin (ACTH) stimulated corticosterone production. This is Corticostatin-3 from Oryctolagus cuniculus (Rabbit).